Reading from the N-terminus, the 134-residue chain is Small ribosomal subunit protein bS16 (134 aa).

The interval 105–134 (EAERRQKRLTAKTRRRQAKKAAEAAGSAEG) is disordered. Over residues 109–123 (RQKRLTAKTRRRQAK) the composition is skewed to basic residues.

It belongs to the bacterial ribosomal protein bS16 family.

The sequence is that of Small ribosomal subunit protein bS16 from Chlorobaculum parvum (strain DSM 263 / NCIMB 8327) (Chlorobium vibrioforme subsp. thiosulfatophilum).